Consider the following 214-residue polypeptide: Thymidylate kinase (214 aa).

10–17 (GGEGVGKT) provides a ligand contact to ATP.

This sequence belongs to the thymidylate kinase family.

The catalysed reaction is dTMP + ATP = dTDP + ADP. Its function is as follows. Phosphorylation of dTMP to form dTDP in both de novo and salvage pathways of dTTP synthesis. The sequence is that of Thymidylate kinase from Bartonella quintana (strain Toulouse) (Rochalimaea quintana).